Here is a 110-residue protein sequence, read N- to C-terminus: Glycine cleavage system H-like protein (110 aa).

The Lipoyl-binding domain maps to 10-97 (VEKVGDLYVF…PEENWLFKLD (88 aa)). Aspartate 27 bears the ADP-ribosyl aspartic acid mark. Position 56 is an N6-lipoyllysine (lysine 56).

As to quaternary structure, lipoylated GcvH-L directly interacts with SAV0325, which reverses the SirTM-mediated mono-ADP-ribosylation of GcvH-L, and with the oxidoreductase SAV0322. In terms of processing, is lipoylated on K-56 by LplA2 (SAV0327) and then mono-ADP-ribosylated, probably on D-27, by SirTM (SAV0326). The mono-ADP-ribosylation state of GcvH-L might regulate the availability of the lipoyl moiety for redox reactions; ADP-ribosylation would inhibit the interaction of the oxidoreductase with GcvH-L when it is not required, thus ADP-ribosylation of GcvH-L might be acting to keep the response 'off' under non-stress conditions.

Its function is as follows. May act as a carrier protein for the ROS scavenging lipoyl moiety and/or as a substrate for oxidoreductases such as SAV0322 and SAV0323. The polypeptide is Glycine cleavage system H-like protein (Staphylococcus aureus (strain Mu50 / ATCC 700699)).